The chain runs to 596 residues: Elongation factor 4 (596 aa).

Residues 2–184 (KQIRNFSIIA…VIVAKIPPPE (183 aa)) form the tr-type G domain. Residues 14–19 (DHGKST) and 131–134 (NKID) contribute to the GTP site.

Belongs to the TRAFAC class translation factor GTPase superfamily. Classic translation factor GTPase family. LepA subfamily.

It is found in the cell inner membrane. It carries out the reaction GTP + H2O = GDP + phosphate + H(+). Its function is as follows. Required for accurate and efficient protein synthesis under certain stress conditions. May act as a fidelity factor of the translation reaction, by catalyzing a one-codon backward translocation of tRNAs on improperly translocated ribosomes. Back-translocation proceeds from a post-translocation (POST) complex to a pre-translocation (PRE) complex, thus giving elongation factor G a second chance to translocate the tRNAs correctly. Binds to ribosomes in a GTP-dependent manner. This is Elongation factor 4 from Shewanella baltica (strain OS223).